Reading from the N-terminus, the 417-residue chain is Trafficking protein particle complex subunit 13 (417 aa).

This sequence belongs to the TRAPPC13 family. In terms of assembly, part of the multisubunit TRAPP (transport protein particle) complex.

This chain is Trafficking protein particle complex subunit 13 (TRAPPC13), found in Pongo abelii (Sumatran orangutan).